A 583-amino-acid chain; its full sequence is Tetratricopeptide repeat protein 39C (583 aa).

A disordered region spans residues Met1–Ala22. TPR repeat units follow at residues Ser315–Gln348, His353–Ser386, and Gly485–Arg518.

The protein belongs to the TTC39 family.

The polypeptide is Tetratricopeptide repeat protein 39C (TTC39C) (Homo sapiens (Human)).